The sequence spans 491 residues: 3-phosphoinositide-dependent protein kinase 1 (491 aa).

The Protein kinase domain occupies 44 to 311; sequence FEFGKIYGVG…YVALKRHPFF (268 aa). ATP is bound by residues 54–56 and K73; that span reads SYS. The PIF-pocket stretch occupies residues 75 to 119; it reads MDKKFITKENKTAYVKLERIVLDQLEHPGIIKLYFTFQDTSSLYM. The segment at 77-112 is PIF-binding; that stretch reads KKFITKENKTAYVKLERIVLDQLEHPGIIKLYFTFQ. Residues 122–124 and E128 each bind ATP; that span reads ESC. D167 (proton acceptor) is an active-site residue. Residue E171 coordinates ATP. S177 carries the post-translational modification Phosphoserine. Residue D185 participates in ATP binding. The tract at residues 185–222 is activation loop; the sequence is DFGSVKPMQDSQITVLPNAASDDKACTFVGTAAYVPPE. Phosphothreonine; by autocatalysis is present on T211. Residues S276 and S337 each carry the phosphoserine modification. Residues 321 to 377 are disordered; it reads SQTPPKLAPDPASQTASPERDDTHGSPWNLTHIGDSLATQNEGHSAPPTSSESSGSI. The span at 365-376 shows a compositional bias: low complexity; that stretch reads SAPPTSSESSGS. Phosphoserine is present on S382. Residues 386-491 enclose the PH domain; the sequence is FDSRWQQFLE…KKAIETLQNR (106 aa).

This sequence belongs to the protein kinase superfamily. AGC Ser/Thr protein kinase family. PDPK1 subfamily. In terms of assembly, interacts with AGC1-5 and AGC1-7. Interacts with the C-terminal PIF domain of the protein kinases D6PK/AGC1-1, OXI1/AGC2-1 and PID. In terms of processing, phosphorylation on Thr-211 in the activation loop is required for full activity. PDK1 itself can autophosphorylate Thr-211, leading to its own activation. In terms of tissue distribution, ubiquitous.

It localises to the cytoplasm. Its subcellular location is the membrane. It carries out the reaction L-seryl-[protein] + ATP = O-phospho-L-seryl-[protein] + ADP + H(+). It catalyses the reaction L-threonyl-[protein] + ATP = O-phospho-L-threonyl-[protein] + ADP + H(+). Its activity is regulated as follows. Activated by phosphatidic acid (PA) and in response to the fungal elicitor xylanase. Its function is as follows. May couple lipid signals to the activation-loop phosphorylation of several protein kinases of the so-called AGC kinase family. Interacts via its pleckstrin homology domain with phosphatidic acid, PtdIns3P and PtdIns(3,4)P2 and to a lesser extent with PtdIns(4,5)P2 and PtdIns4P. May play a general role in signaling processes controlling the pathogen/stress response, polar auxin transport and development. Transphosphorylates the AGC protein kinases OXI1/AGC2-1, PK1/S6K1, PK19/S6K2 and PID resulting in their activation. The polypeptide is 3-phosphoinositide-dependent protein kinase 1 (PDPK1) (Arabidopsis thaliana (Mouse-ear cress)).